Reading from the N-terminus, the 406-residue chain is E3 ubiquitin-protein ligase RING1 (406 aa).

The residue at position 24 (T24) is a Phosphothreonine. The necessary for transcriptional repression stretch occupies residues 30–234 (MDGTEIAVSP…GGAGSEDSGD (205 aa)). Residue S38 is modified to Phosphoserine. Residues 48–88 (CPICLDMLKNTMTTKECLHRFCSDCIVTALRSGNKECPTCR) form an RING-type zinc finger. 3 positions are modified to phosphoserine: S140, S187, and S190. 2 disordered regions span residues 151 to 263 (HRAQ…GEIE) and 309 to 354 (QQQE…PSLE). Acidic residues predominate over residues 175 to 187 (EPGEGEGDGEDIS). The Nuclear localization signal motif lies at 201 to 204 (KRPR). Gly residues predominate over residues 205 to 228 (GGGAGGSSVGTGGGAAGGACGGAG). Phosphothreonine is present on T215. Phosphoserine occurs at positions 229 and 232. The interval 230–406 (EDSGDRGGTL…LCYAPTKDPK (177 aa)) is necessary for interaction with CBX2. Residues 235-244 (RGGTLGGGTL) are compositionally biased toward gly residues. The span at 246 to 258 (PPSPPGAPSPPEP) shows a compositional bias: pro residues. A phosphoserine mark is found at S248 and S254. The span at 317 to 343 (GGPGGGASDTGGPDGGGGERGVSGGGE) shows a compositional bias: gly residues.

In terms of assembly, component of chromatin-associated Polycomb (PcG) complexes. Part of the E2F6.com-1 complex in G0 phase composed of E2F6, MGA, MAX, TFDP1, CBX3, BAT8, EUHMTASE1, RING1, RNF2/RING2 MBLR, L3MBTL2 and YAF2. Interacts with CBX2 and PCGF6. Component of a PRC1-like complex. Component of repressive BCOR complex containing Polycomb group subcomplex at least composed of RYBP, PCGF1, BCOR and RNF2/RING2. Interacts with BMI1, PHC2, PCGF2, RNF2; CBX6, CBX7 and CBX8. Interacts with MN1. Interacts with USP26.

The protein resides in the nucleus speckle. The enzyme catalyses S-ubiquitinyl-[E2 ubiquitin-conjugating enzyme]-L-cysteine + [acceptor protein]-L-lysine = [E2 ubiquitin-conjugating enzyme]-L-cysteine + N(6)-ubiquitinyl-[acceptor protein]-L-lysine.. Its pathway is protein modification; protein ubiquitination. Constitutes one of the E3 ubiquitin-protein ligases that mediate monoubiquitination of 'Lys-119' of histone H2A, thereby playing a central role in histone code and gene regulation. H2A 'Lys-119' ubiquitination gives a specific tag for epigenetic transcriptional repression and participates in X chromosome inactivation of female mammals. Essential component of a Polycomb group (PcG) multiprotein PRC1-like complex, a complex class required to maintain the transcriptionally repressive state of many genes, including Hox genes, throughout development. PcG PRC1 complex acts via chromatin remodeling and modification of histones, rendering chromatin heritably changed in its expressibility. Compared to RNF2/RING2, it does not have the main E3 ubiquitin ligase activity on histone H2A, and it may rather act as a modulator of RNF2/RING2 activity. The chain is E3 ubiquitin-protein ligase RING1 from Rattus norvegicus (Rat).